The chain runs to 352 residues: ATPase GET3 (352 aa).

26–33 (KGGVGKTT) contacts ATP. Residue D57 is part of the active site. E243 and N270 together coordinate ATP. Zn(2+)-binding residues include C283 and C286.

The protein belongs to the arsA ATPase family. Homodimer. Component of the Golgi to ER traffic (GET) complex, which is composed of GET1, GET2 and GET3. Within the complex, GET1 and GET2 form a heterotetramer which is stabilized by phosphatidylinositol binding and which binds to the GET3 homodimer. Interacts with the chloride channel protein GEF1.

It localises to the cytoplasm. Its subcellular location is the endoplasmic reticulum. It is found in the golgi apparatus. In terms of biological role, ATPase required for the post-translational delivery of tail-anchored (TA) proteins to the endoplasmic reticulum. Recognizes and selectively binds the transmembrane domain of TA proteins in the cytosol. This complex then targets to the endoplasmic reticulum by membrane-bound receptors GET1 and GET2, where the tail-anchored protein is released for insertion. This process is regulated by ATP binding and hydrolysis. ATP binding drives the homodimer towards the closed dimer state, facilitating recognition of newly synthesized TA membrane proteins. ATP hydrolysis is required for insertion. Subsequently, the homodimer reverts towards the open dimer state, lowering its affinity for the GET1-GET2 receptor, and returning it to the cytosol to initiate a new round of targeting. Cooperates with the HDEL receptor ERD2 to mediate the ATP-dependent retrieval of resident ER proteins that contain a C-terminal H-D-E-L retention signal from the Golgi to the ER. Involved in low-level resistance to the oxyanions arsenite and arsenate, and in heat tolerance. In Vanderwaltozyma polyspora (strain ATCC 22028 / DSM 70294 / BCRC 21397 / CBS 2163 / NBRC 10782 / NRRL Y-8283 / UCD 57-17) (Kluyveromyces polysporus), this protein is ATPase GET3.